The primary structure comprises 461 residues: Kynureninase (461 aa).

Residues leucine 114, threonine 115, 142–145 (FPSD), aspartate 228, histidine 231, and tyrosine 253 contribute to the pyridoxal 5'-phosphate site. The residue at position 254 (lysine 254) is an N6-(pyridoxal phosphate)lysine. Pyridoxal 5'-phosphate is bound by residues tryptophan 288 and asparagine 316.

This sequence belongs to the kynureninase family. As to quaternary structure, homodimer. The cofactor is pyridoxal 5'-phosphate.

The protein resides in the cytoplasm. The catalysed reaction is L-kynurenine + H2O = anthranilate + L-alanine + H(+). It catalyses the reaction 3-hydroxy-L-kynurenine + H2O = 3-hydroxyanthranilate + L-alanine + H(+). The protein operates within amino-acid degradation; L-kynurenine degradation; L-alanine and anthranilate from L-kynurenine: step 1/1. Its pathway is cofactor biosynthesis; NAD(+) biosynthesis; quinolinate from L-kynurenine: step 2/3. Functionally, catalyzes the cleavage of L-kynurenine (L-Kyn) and L-3-hydroxykynurenine (L-3OHKyn) into anthranilic acid (AA) and 3-hydroxyanthranilic acid (3-OHAA), respectively. In Lodderomyces elongisporus (strain ATCC 11503 / CBS 2605 / JCM 1781 / NBRC 1676 / NRRL YB-4239) (Yeast), this protein is Kynureninase.